We begin with the raw amino-acid sequence, 36 residues long: uncharacterized protein (36 aa).

This is an uncharacterized protein from Halalkalibacterium halodurans (strain ATCC BAA-125 / DSM 18197 / FERM 7344 / JCM 9153 / C-125) (Bacillus halodurans).